The primary structure comprises 151 residues: MKINIYAILKPTADNFDQIIKEFIKMSSKYAKVEVHYIFNKNIAKAQTIGEKESQLAYSQTYEPLLKGYNIALDVLGKRVDTYAFSSLIDNKNEVNFFIGGAYGFQREFLNKCDSVISLSDLTMAHKVANVVLTEQIFRSLCIQNNHPYHK.

S-adenosyl-L-methionine-binding positions include leucine 73, glycine 100, and 119-124 (LSDLTM).

Belongs to the RNA methyltransferase RlmH family. Homodimer.

Its subcellular location is the cytoplasm. It carries out the reaction pseudouridine(1915) in 23S rRNA + S-adenosyl-L-methionine = N(3)-methylpseudouridine(1915) in 23S rRNA + S-adenosyl-L-homocysteine + H(+). Its function is as follows. Specifically methylates the pseudouridine at position 1915 (m3Psi1915) in 23S rRNA. The chain is Ribosomal RNA large subunit methyltransferase H from Aliarcobacter butzleri (strain RM4018) (Arcobacter butzleri).